The primary structure comprises 493 residues: MKLNPLMAAGMGLGFTLFWACPTLAALTEQQNFGIEIKATAQAEDDRDLGTRSGGDVNGVGLDLRPWVYGERGDWSGYAMGQVVTATDTIQTDPLEQSNSDGSGTQTSRGTASEREVEKSYAALREFWIGYSGFTPYPGEILKVGRQRLRNDDGQWHDTNIEAINWNFDTTLLRAELGAAQRFSEYRTDLTELAPDDEDRKHLFGSASYQWTPGHWAGVRAHYSHDDGKLKSQGEQLDDLDKTSNGNLTWLGLQADSDAYNYRNTTPLNYWGSLTWLNGTRDEIGVTSAANDQFFAGEKNSRDMNGWATDLGLRLRLDPQWQVGAAYSRASKDYIQNGLESNRSNWTGTRSRIHRFGEAFQGEMANVETGSLFASWQMNEEYDASLIYHKFRRVDGNTGIGGSGINAVRENGDSNTFSSLPLEDGRKDLGQEMDLVVTKYFKQGLLPASLSQSFDEPSALVRLRAGVFKPGDAYHNGVDEYMHRAVVDVIWRF.

A signal peptide spans 1–25 (MKLNPLMAAGMGLGFTLFWACPTLA). Over residues 93 to 111 (DPLEQSNSDGSGTQTSRGT) the composition is skewed to polar residues. The disordered stretch occupies residues 93 to 115 (DPLEQSNSDGSGTQTSRGTASER).

The protein belongs to the AlgE family.

Its subcellular location is the cell outer membrane. It participates in glycan biosynthesis; alginate biosynthesis. Its function is as follows. Has non-porin-like, channel-forming properties and probably functions as an alginate permeability pore. This chain is Alginate production protein AlgE (algE), found in Pseudomonas syringae pv. tomato (strain ATCC BAA-871 / DC3000).